The sequence spans 402 residues: Putative F-box protein At1g70970 (402 aa).

The F-box domain occupies 4–52 (SSSETLHVEDLQTEIMSWLPLKSLLRFVIVSKKWASIIRGEQFKALYLR).

The protein is Putative F-box protein At1g70970 of Arabidopsis thaliana (Mouse-ear cress).